Consider the following 365-residue polypeptide: Anhydro-N-acetylmuramic acid kinase (365 aa).

Residue 9–16 (GTSLDGVD) coordinates ATP.

Belongs to the anhydro-N-acetylmuramic acid kinase family.

It carries out the reaction 1,6-anhydro-N-acetyl-beta-muramate + ATP + H2O = N-acetyl-D-muramate 6-phosphate + ADP + H(+). It participates in amino-sugar metabolism; 1,6-anhydro-N-acetylmuramate degradation. The protein operates within cell wall biogenesis; peptidoglycan recycling. Functionally, catalyzes the specific phosphorylation of 1,6-anhydro-N-acetylmuramic acid (anhMurNAc) with the simultaneous cleavage of the 1,6-anhydro ring, generating MurNAc-6-P. Is required for the utilization of anhMurNAc either imported from the medium or derived from its own cell wall murein, and thus plays a role in cell wall recycling. The chain is Anhydro-N-acetylmuramic acid kinase from Rhodopseudomonas palustris (strain BisB18).